A 500-amino-acid chain; its full sequence is Probable cytosol aminopeptidase (500 aa).

Positions 274 and 279 each coordinate Mn(2+). Residue Lys-286 is part of the active site. The Mn(2+) site is built by Asp-297, Asp-356, and Glu-358. Arg-360 is a catalytic residue.

Belongs to the peptidase M17 family. The cofactor is Mn(2+).

The protein resides in the cytoplasm. The enzyme catalyses Release of an N-terminal amino acid, Xaa-|-Yaa-, in which Xaa is preferably Leu, but may be other amino acids including Pro although not Arg or Lys, and Yaa may be Pro. Amino acid amides and methyl esters are also readily hydrolyzed, but rates on arylamides are exceedingly low.. It carries out the reaction Release of an N-terminal amino acid, preferentially leucine, but not glutamic or aspartic acids.. Functionally, presumably involved in the processing and regular turnover of intracellular proteins. Catalyzes the removal of unsubstituted N-terminal amino acids from various peptides. The protein is Probable cytosol aminopeptidase of Saccharophagus degradans (strain 2-40 / ATCC 43961 / DSM 17024).